The sequence spans 431 residues: Chaperone SurA (431 aa).

The signal sequence occupies residues 1-22 (MKLWKPTLISVLSALTLFNAHA). PpiC domains follow at residues 173–271 (TVQY…KIDD) and 280–380 (VTEV…EVLD).

The protein resides in the periplasm. It catalyses the reaction [protein]-peptidylproline (omega=180) = [protein]-peptidylproline (omega=0). Chaperone involved in the correct folding and assembly of outer membrane proteins. Recognizes specific patterns of aromatic residues and the orientation of their side chains, which are found more frequently in integral outer membrane proteins. May act in both early periplasmic and late outer membrane-associated steps of protein maturation. This Vibrio cholerae serotype O1 (strain ATCC 39315 / El Tor Inaba N16961) protein is Chaperone SurA.